The chain runs to 211 residues: Bifunctional transcriptional activator/DNA repair enzyme AdaA (211 aa).

Cys54 serves as the catalytic Nucleophile; methyl group acceptor from methylphosphotriester. Zn(2+) is bound by residues Cys54, Cys58, Cys85, and Cys88. One can recognise an HTH araC/xylS-type domain in the interval Asp102–Met200. A DNA-binding region (H-T-H motif) is located at residues Glu119–Lys140.

The cofactor is Zn(2+).

It carries out the reaction (2'-deoxyribonucleoside 5'-methylphosphotriester)-DNA + L-cysteinyl-[protein] = 2'-deoxyribonucleotide-DNA + S-methyl-L-cysteinyl-[protein] + H(+). In terms of biological role, is involved in the adaptive response to alkylation damage in DNA caused by alkylating agents. Repairs the methylphosphotriester lesions in DNA by a direct and irreversible transfer of the methyl group to one of its own cysteine residues. Its function is as follows. The methylation of AdaA by methylphosphotriesters in DNA leads to its activation as a transcriptional regulator that activates the transcription of the ada operon which consists of adaA and adaB, and of the adjacent gene alkA. The protein is Bifunctional transcriptional activator/DNA repair enzyme AdaA (adaA) of Bacillus subtilis (strain 168).